Here is a 403-residue protein sequence, read N- to C-terminus: Phosphoglycerate kinase (403 aa).

Substrate contacts are provided by residues 21–23, R36, 59–62, R119, and R159; these read DFN and HLGR. ATP is bound by residues K214, G301, E332, and 359 to 362; that span reads GGDS.

The protein belongs to the phosphoglycerate kinase family. Monomer.

It localises to the cytoplasm. The enzyme catalyses (2R)-3-phosphoglycerate + ATP = (2R)-3-phospho-glyceroyl phosphate + ADP. Its pathway is carbohydrate degradation; glycolysis; pyruvate from D-glyceraldehyde 3-phosphate: step 2/5. The polypeptide is Phosphoglycerate kinase (Lactobacillus delbrueckii subsp. bulgaricus (strain ATCC 11842 / DSM 20081 / BCRC 10696 / JCM 1002 / NBRC 13953 / NCIMB 11778 / NCTC 12712 / WDCM 00102 / Lb 14)).